The following is a 536-amino-acid chain: Xylulose kinase (536 aa).

Residues His-99, Arg-170, Asp-280, and Asn-281 each contribute to the substrate site. Residues Trp-355, 441–442 (GA), and Asn-445 each bind ATP.

Belongs to the FGGY kinase family. Monomer.

The catalysed reaction is D-xylulose + ATP = D-xylulose 5-phosphate + ADP + H(+). Phosphorylates D-xylulose to produce D-xylulose 5-phosphate, a molecule that may play an important role in the regulation of glucose metabolism and lipogenesis. This is Xylulose kinase (Xylb) from Rattus norvegicus (Rat).